A 161-amino-acid chain; its full sequence is MSQLTHINAAGEAHMVDVSAKAETVREARAEAFVTMRSETLAMIIDGRHHKGDVFATARIAGIQAAKRTWDLIPLCHPLMLSKVEVNLQAEPEHNRVRIETLCRLTGKTGVEMEALTAASVAALTIYDMCKAVQKDMVIGSVRLLAKSGGKSGDFKVEADD.

Residues 75 to 77 and 113 to 114 each bind substrate; these read LCH and ME. Asp128 is an active-site residue.

It belongs to the MoaC family. As to quaternary structure, homohexamer; trimer of dimers.

It carries out the reaction (8S)-3',8-cyclo-7,8-dihydroguanosine 5'-triphosphate = cyclic pyranopterin phosphate + diphosphate. The protein operates within cofactor biosynthesis; molybdopterin biosynthesis. Its function is as follows. Catalyzes the conversion of (8S)-3',8-cyclo-7,8-dihydroguanosine 5'-triphosphate to cyclic pyranopterin monophosphate (cPMP). The protein is Cyclic pyranopterin monophosphate synthase of Escherichia coli O9:H4 (strain HS).